Reading from the N-terminus, the 424-residue chain is Glutamyl-tRNA(Gln) amidotransferase subunit D (424 aa).

The tract at residues 58–79 is disordered; sequence NTNGGLNGGKEHKTAGEEVQKS. Residues 66–78 are compositionally biased toward basic and acidic residues; sequence GKEHKTAGEEVQK. One can recognise an Asparaginase/glutaminase domain in the interval 84-406; it reads PKVAILSTGG…LGQTDEFNEA (323 aa). Residues T94, T170, D171, and K247 contribute to the active site.

Belongs to the asparaginase 1 family. GatD subfamily. In terms of assembly, heterodimer of GatD and GatE.

The enzyme catalyses L-glutamyl-tRNA(Gln) + L-glutamine + ATP + H2O = L-glutaminyl-tRNA(Gln) + L-glutamate + ADP + phosphate + H(+). Its function is as follows. Allows the formation of correctly charged Gln-tRNA(Gln) through the transamidation of misacylated Glu-tRNA(Gln) in organisms which lack glutaminyl-tRNA synthetase. The reaction takes place in the presence of glutamine and ATP through an activated gamma-phospho-Glu-tRNA(Gln). The GatDE system is specific for glutamate and does not act on aspartate. In Methanosarcina barkeri (strain Fusaro / DSM 804), this protein is Glutamyl-tRNA(Gln) amidotransferase subunit D.